A 531-amino-acid chain; its full sequence is MLMSTTPYFGEVSKRRTFAIISHPDAGKTTITEKVLLFGRAIQVAGTVKGRGSNQHAKSDWMEMEKERGISVTTSVMQFPYGDCLVNLLDTPGHEDFSEDTYRTLTAVDSCLMVIDAAKGVEDRTRKLMEVTRLRDTPIVTFMNKLDREIRDPMELMDEVENELKIACSPITWPIGCGKEFKGVYHIHRDETILYTSGQGHTIQEERIIKGLDNPELDQAVGANLAAQLREELELVLGASHEFDRELFLQGELTPVFFGTALGNFGVDHMLDGLTQWAPSPMPRQAAERVVEASEEKFTGFVFKIQANMDPKHRDRIAFVRIVSGTYKQGMKMNHVRLGKQVNISDAVTFMAGDRARAEEAFAGDIIGLHNHGTIQIGDTFTQGETLKFTGIPNFAPELFRRIRLRDPLKQKQLLKGLVQLSEEGAVQVFRPLQNNDLIVGAVGVLQFDVVVSRLKSEYNVEAIYEGVNVATARWVECDDVKKFEEFKRKNQSNLALDGGDNLAYIAPTMVNLNLAQERSPEVKFRATREH.

Residues 13–282 (SKRRTFAIIS…GLTQWAPSPM (270 aa)) enclose the tr-type G domain. Residues 22 to 29 (SHPDAGKT), 90 to 94 (DTPGH), and 144 to 147 (NKLD) each bind GTP.

Belongs to the TRAFAC class translation factor GTPase superfamily. Classic translation factor GTPase family. PrfC subfamily.

The protein localises to the cytoplasm. Its function is as follows. Increases the formation of ribosomal termination complexes and stimulates activities of RF-1 and RF-2. It binds guanine nucleotides and has strong preference for UGA stop codons. It may interact directly with the ribosome. The stimulation of RF-1 and RF-2 is significantly reduced by GTP and GDP, but not by GMP. The protein is Peptide chain release factor 3 of Vibrio cholerae serotype O1 (strain ATCC 39541 / Classical Ogawa 395 / O395).